The sequence spans 558 residues: Formate--tetrahydrofolate ligase (558 aa).

An ATP-binding site is contributed by 66–73 (TPAGEGKT).

This sequence belongs to the formate--tetrahydrofolate ligase family.

It catalyses the reaction (6S)-5,6,7,8-tetrahydrofolate + formate + ATP = (6R)-10-formyltetrahydrofolate + ADP + phosphate. It participates in one-carbon metabolism; tetrahydrofolate interconversion. The chain is Formate--tetrahydrofolate ligase from Neisseria gonorrhoeae (strain NCCP11945).